Consider the following 302-residue polypeptide: Acetyl-coenzyme A carboxylase carboxyl transferase subunit beta (302 aa).

One can recognise a CoA carboxyltransferase N-terminal domain in the interval 25–294 (VWTKCDSCGQ…PQEDIVTEAA (270 aa)). Zn(2+)-binding residues include Cys-29, Cys-32, Cys-48, and Cys-51. The segment at 29–51 (CDSCGQVLYRAELERNLEVCPKC) adopts a C4-type zinc-finger fold.

Belongs to the AccD/PCCB family. In terms of assembly, acetyl-CoA carboxylase is a heterohexamer composed of biotin carboxyl carrier protein (AccB), biotin carboxylase (AccC) and two subunits each of ACCase subunit alpha (AccA) and ACCase subunit beta (AccD). Requires Zn(2+) as cofactor.

The protein localises to the cytoplasm. The enzyme catalyses N(6)-carboxybiotinyl-L-lysyl-[protein] + acetyl-CoA = N(6)-biotinyl-L-lysyl-[protein] + malonyl-CoA. The protein operates within lipid metabolism; malonyl-CoA biosynthesis; malonyl-CoA from acetyl-CoA: step 1/1. Component of the acetyl coenzyme A carboxylase (ACC) complex. Biotin carboxylase (BC) catalyzes the carboxylation of biotin on its carrier protein (BCCP) and then the CO(2) group is transferred by the transcarboxylase to acetyl-CoA to form malonyl-CoA. This is Acetyl-coenzyme A carboxylase carboxyl transferase subunit beta from Erwinia tasmaniensis (strain DSM 17950 / CFBP 7177 / CIP 109463 / NCPPB 4357 / Et1/99).